We begin with the raw amino-acid sequence, 738 residues long: Polyribonucleotide nucleotidyltransferase (738 aa).

Mg(2+) contacts are provided by aspartate 528 and aspartate 534. The KH domain occupies 594–653; sequence PRVVRVKIPVQKIGELIGPKGKVINSIQDETGAEISIEDDGTVYIGSSQADSSEKAVAMV. Residues 665–737 enclose the S1 motif domain; the sequence is GSQFLGTVVK…DRGKLCLVAV (73 aa).

Belongs to the polyribonucleotide nucleotidyltransferase family. It depends on Mg(2+) as a cofactor.

The protein localises to the cytoplasm. The catalysed reaction is RNA(n+1) + phosphate = RNA(n) + a ribonucleoside 5'-diphosphate. In terms of biological role, involved in mRNA degradation. Catalyzes the phosphorolysis of single-stranded polyribonucleotides processively in the 3'- to 5'-direction. This Tropheryma whipplei (strain Twist) (Whipple's bacillus) protein is Polyribonucleotide nucleotidyltransferase.